The chain runs to 253 residues: Triosephosphate isomerase (253 aa).

Residue 9-11 (NWK) participates in substrate binding. The Electrophile role is filled by His97. The active-site Proton acceptor is the Glu169. Residues Gly175, Ser215, and 236–237 (GG) each bind substrate.

Belongs to the triosephosphate isomerase family. As to quaternary structure, homodimer.

Its subcellular location is the cytoplasm. The enzyme catalyses D-glyceraldehyde 3-phosphate = dihydroxyacetone phosphate. The protein operates within carbohydrate biosynthesis; gluconeogenesis. It functions in the pathway carbohydrate degradation; glycolysis; D-glyceraldehyde 3-phosphate from glycerone phosphate: step 1/1. Its function is as follows. Involved in the gluconeogenesis. Catalyzes stereospecifically the conversion of dihydroxyacetone phosphate (DHAP) to D-glyceraldehyde-3-phosphate (G3P). The sequence is that of Triosephosphate isomerase from Staphylococcus saprophyticus subsp. saprophyticus (strain ATCC 15305 / DSM 20229 / NCIMB 8711 / NCTC 7292 / S-41).